A 208-amino-acid chain; its full sequence is Uracil phosphoribosyltransferase (208 aa).

Residues Arg78, Arg103, and Asp130–Thr138 contribute to the 5-phospho-alpha-D-ribose 1-diphosphate site. Uracil-binding positions include Ile193 and Gly198–Ala200. Position 199 (Asp199) interacts with 5-phospho-alpha-D-ribose 1-diphosphate.

Belongs to the UPRTase family. It depends on Mg(2+) as a cofactor.

It catalyses the reaction UMP + diphosphate = 5-phospho-alpha-D-ribose 1-diphosphate + uracil. The protein operates within pyrimidine metabolism; UMP biosynthesis via salvage pathway; UMP from uracil: step 1/1. Its activity is regulated as follows. Allosterically activated by GTP. In terms of biological role, catalyzes the conversion of uracil and 5-phospho-alpha-D-ribose 1-diphosphate (PRPP) to UMP and diphosphate. The polypeptide is Uracil phosphoribosyltransferase (Nitratidesulfovibrio vulgaris (strain ATCC 29579 / DSM 644 / CCUG 34227 / NCIMB 8303 / VKM B-1760 / Hildenborough) (Desulfovibrio vulgaris)).